The following is a 173-amino-acid chain: Protein tyrosine phosphatase type IVA 3 (173 aa).

Residues 8–161 enclose the Tyrosine-protein phosphatase domain; that stretch reads APVEVSYKHM…YRPKQRLRFK (154 aa). The cysteines at positions 49 and 104 are disulfide-linked. Catalysis depends on Asp72, which acts as the Proton donor. The active-site Phosphocysteine intermediate is the Cys104. Residue Arg110 participates in substrate binding. Cys170 carries the post-translational modification Cysteine methyl ester. Residue Cys170 is the site of S-farnesyl cysteine attachment. A propeptide spans 171–173 (removed in mature form); sequence CVM.

This sequence belongs to the protein-tyrosine phosphatase family. As to quaternary structure, interacts with tubulin. Farnesylated. Farnesylation is required for membrane targeting. In terms of tissue distribution, mainly expressed in cardiomyocytes and skeletal muscle; also found in pancreas. Consistently overexpressed in colon cancer metastasis.

It localises to the cell membrane. It is found in the early endosome. The catalysed reaction is O-phospho-L-tyrosyl-[protein] + H2O = L-tyrosyl-[protein] + phosphate. Its activity is regulated as follows. Inhibited by sodium orthovanadate and peroxovanadium compounds, and by pentamidine. Protein tyrosine phosphatase which stimulates progression from G1 into S phase during mitosis. Enhances cell proliferation, cell motility and invasive activity, and promotes cancer metastasis. May be involved in the progression of cardiac hypertrophy by inhibiting intracellular calcium mobilization in response to angiotensin II. The protein is Protein tyrosine phosphatase type IVA 3 (PTP4A3) of Homo sapiens (Human).